The following is a 387-amino-acid chain: 8-amino-7-oxononanoate synthase (387 aa).

Residue 109 to 110 participates in pyridoxal 5'-phosphate binding; it reads GY. Residue His134 coordinates substrate. Pyridoxal 5'-phosphate contacts are provided by Ser182, His214, and Thr242. Residue Lys245 is modified to N6-(pyridoxal phosphate)lysine. Thr359 is a binding site for substrate.

This sequence belongs to the class-II pyridoxal-phosphate-dependent aminotransferase family. BioF subfamily. Homodimer. It depends on pyridoxal 5'-phosphate as a cofactor.

It catalyses the reaction 6-carboxyhexanoyl-[ACP] + L-alanine + H(+) = (8S)-8-amino-7-oxononanoate + holo-[ACP] + CO2. Its pathway is cofactor biosynthesis; biotin biosynthesis. Catalyzes the decarboxylative condensation of pimeloyl-[acyl-carrier protein] and L-alanine to produce 8-amino-7-oxononanoate (AON), [acyl-carrier protein], and carbon dioxide. This Haemophilus ducreyi (strain 35000HP / ATCC 700724) protein is 8-amino-7-oxononanoate synthase.